We begin with the raw amino-acid sequence, 154 residues long: MKTFSAKPAEVTKKWVIIDATGLVVGRLATLVAMRLRGKHLPTYTPHVDCGDNIIIINAAKVVLTGRKRDNKVYYHHTGFIGGIKERTAKSILEGRFPERVVEKAVERMIPRGPLGRVQMGNLRVYGGAEHPHEAQQPEPLDVAAMNRKNMRAA.

This sequence belongs to the universal ribosomal protein uL13 family. As to quaternary structure, part of the 50S ribosomal subunit.

In terms of biological role, this protein is one of the early assembly proteins of the 50S ribosomal subunit, although it is not seen to bind rRNA by itself. It is important during the early stages of 50S assembly. The chain is Large ribosomal subunit protein uL13 from Rhodopseudomonas palustris (strain BisB5).